Consider the following 304-residue polypeptide: Murein tetrapeptide carboxypeptidase (304 aa).

Residue serine 106 is the Nucleophile of the active site. Residues glutamate 200 and histidine 270 each act as charge relay system in the active site.

Belongs to the peptidase S66 family.

Its subcellular location is the cytoplasm. The catalysed reaction is N-acetyl-D-glucosaminyl-N-acetylmuramoyl-L-alanyl-meso-2,6-diaminoheptanedioyl-D-alanine + H2O = N-acetyl-D-glucosaminyl-N-acetylmuramoyl-L-alanyl-meso-2,6-diaminoheptanedioate + D-alanine. It functions in the pathway cell wall biogenesis; peptidoglycan recycling. With respect to regulation, inhibited by beta-lactams containing a D-amino acid side chain. Its function is as follows. Releases the terminal D-alanine residue from the cytoplasmic tetrapeptide recycling product L-Ala-gamma-D-Glu-meso-Dap-D-Ala. To a lesser extent, can also cleave D-Ala from murein derivatives containing the tetrapeptide, i.e. MurNAc-tetrapeptide, UDP-MurNAc-tetrapeptide, GlcNAc-MurNAc-tetrapeptide, and GlcNAc-anhMurNAc-tetrapeptide. Does not act on murein sacculi or cross-linked muropeptides. The tripeptides produced by the LcdA reaction can then be reused as peptidoglycan building blocks; LcdA is thereby involved in murein recycling. Is also essential for viability during stationary phase. This Escherichia coli (strain K12) protein is Murein tetrapeptide carboxypeptidase (ldcA).